Consider the following 445-residue polypeptide: Methylenetetrahydrofolate--tRNA-(uracil-5-)-methyltransferase TrmFO (445 aa).

Position 9–14 (9–14 (GGGLAG)) interacts with FAD.

Belongs to the MnmG family. TrmFO subfamily. FAD is required as a cofactor.

Its subcellular location is the cytoplasm. The catalysed reaction is uridine(54) in tRNA + (6R)-5,10-methylene-5,6,7,8-tetrahydrofolate + NADH + H(+) = 5-methyluridine(54) in tRNA + (6S)-5,6,7,8-tetrahydrofolate + NAD(+). The enzyme catalyses uridine(54) in tRNA + (6R)-5,10-methylene-5,6,7,8-tetrahydrofolate + NADPH + H(+) = 5-methyluridine(54) in tRNA + (6S)-5,6,7,8-tetrahydrofolate + NADP(+). Its function is as follows. Catalyzes the folate-dependent formation of 5-methyl-uridine at position 54 (M-5-U54) in all tRNAs. The chain is Methylenetetrahydrofolate--tRNA-(uracil-5-)-methyltransferase TrmFO from Solibacter usitatus (strain Ellin6076).